The chain runs to 21 residues: Nigrocin-2GRb (21 aa).

Expressed by the skin glands.

It localises to the secreted. Its function is as follows. Antimicrobial peptide active against the Gram-positive bacterium S.aureus (MIC=12.5 uM) and against the Gram-negative bacteria E.coli (MIC=3 uM). Has antifungal activity against C.albicans (MIC=50 uM). Has some hemolytic activity against human erythrocytes (LC(50)=40 uM). The protein is Nigrocin-2GRb of Odorrana grahami (Yunnanfu frog).